Reading from the N-terminus, the 395-residue chain is Zinc-regulated GTPase metalloprotein activator 1E (395 aa).

The tract at residues 1 to 22 (MLPAVGSVDEEEDPAEEDCPEL) is disordered. A compositionally biased stretch (acidic residues) spans 8–20 (VDEEEDPAEEDCP). Positions 17–24 (EDCPELVP) match the psi-PxLVp motif motif. 49 to 56 (GYLGAGKT) contributes to the GTP binding site. C107, C109, and C110 together coordinate Zn(2+). The CXCC motif motif lies at 107–110 (CLCC). GTP contacts are provided by residues 110 to 114 (CSVKD) and 203 to 206 (NKTD). The CobW C-terminal domain maps to 274–377 (IVTITFEVPG…ILKQLFIATV (104 aa)).

The protein belongs to the SIMIBI class G3E GTPase family. ZNG1 subfamily.

It localises to the nucleus. The enzyme catalyses GTP + H2O = GDP + phosphate + H(+). Functionally, zinc chaperone that directly transfers zinc cofactor to target metalloproteins, thereby activating them. Catalyzes zinc insertion into the active site of methionine aminopeptidase METAP1, which function to cleave the initiator methionine from polypeptides during or after protein translation. Mechanistically, the N-terminal psi-PxLVp motif binds to the C6H2-type zinc finger of inactive form of METAP1. After formation of the docked complex, zinc is transferred from the CXCC motif in the GTPase domain of ZNG1E to the zinc binding site in the peptidase domain of METAP1 in a process requiring GTP hydrolysis. GTP/GDP exchange is required for release of active METAP1. The polypeptide is Zinc-regulated GTPase metalloprotein activator 1E (Homo sapiens (Human)).